Reading from the N-terminus, the 444-residue chain is COP9 signalosome complex subunit 2 (444 aa).

Positions 1 to 31 (MSDNDDDFMCDDDEDYGLEYSEDSNSEPDVD) are disordered. Residues 255–417 (AHTDFFEAFK…QVLQLDKINS (163 aa)) enclose the PCI domain.

The protein belongs to the CSN2 family. In terms of assembly, component of the CSN complex, probably composed of CSN1b, alien/CSN2, CSN3, CSN4, CSN5, CSN6, CSN7 and CSN8. Interacts with Rpn6. Expressed during embryonic stages 11-14 in the muscle attachment sites (apodemes); pharynx attachment to the roof of the mouth and in the epidermis of the head for the dorsal and ventral prothoracic pharyngeal muscle attachment. From stage 16 onwards expression is seen in all thoracic and abdominal apodemes.

It is found in the cytoplasm. Its subcellular location is the nucleus. Its function is as follows. Component of the COP9 signalosome complex (CSN), a complex involved in various cellular and developmental processes. The CSN complex is an essential regulator of the ubiquitin (Ubl) conjugation pathway by mediating the deneddylation of the cullin subunits of the SCF-type E3 ligase complexes, leading to decrease the Ubl ligase activity of SCF. The CSN complex plays an essential role in oogenesis and embryogenesis and is required for proper photoreceptor R cell differentiation and promote lamina glial cell migration or axon targeting. It also promotes Ubl-dependent degradation of cyclin E (CycE) during early oogenesis. In Drosophila melanogaster (Fruit fly), this protein is COP9 signalosome complex subunit 2.